A 193-amino-acid polypeptide reads, in one-letter code: Large ribosomal subunit protein uL11 (193 aa).

This sequence belongs to the universal ribosomal protein uL11 family. As to quaternary structure, part of the ribosomal stalk of the 50S ribosomal subunit. Interacts with L10 and the large rRNA to form the base of the stalk. L10 forms an elongated spine to which L12 dimers bind in a sequential fashion forming a multimeric L10(L12)X complex. In terms of processing, one or more lysine residues are methylated.

Forms part of the ribosomal stalk which helps the ribosome interact with GTP-bound translation factors. This is Large ribosomal subunit protein uL11 from Mycoplasmopsis synoviae (strain 53) (Mycoplasma synoviae).